The following is a 1314-amino-acid chain: E3 ubiquitin-protein ligase RNF123 (1314 aa).

N-acetylalanine is present on A2. In terms of domain architecture, B30.2/SPRY spans 74–254 (VDSEDEESQG…VAFNFGSRPL (181 aa)). Residues 460–481 (HRSSREGKDSAEDRAEAAEERP) form a disordered region. A compositionally biased stretch (basic and acidic residues) spans 462 to 481 (SSREGKDSAEDRAEAAEERP). S675 carries the post-translational modification Phosphoserine. R683 is subject to Asymmetric dimethylarginine. The segment at 968–974 (WILVRLW) is interaction with NFKB1. Zn(2+) contacts are provided by C1254, C1257, C1269, H1271, C1274, C1277, C1288, and C1291. The RING-type zinc-finger motif lies at 1254-1292 (CPICYAHPISAVFQPCGHKSCKACIDQHLMNNKDCFFCK).

Component of the KPC complex composed of RNF123/KPC1 and UBAC1/KPC2. Interacts with UBAC1 and CDKN1B via its N-terminal domain. Interacts with RIGI (via N-terminus) and IFIH1 (via N-terminus). In terms of processing, ubiquitinated, leading to its degradation. Deubiquitinated by USP19, thereby stimulating CDKN1B ubiquitin-dependent degradation.

It localises to the cytoplasm. It catalyses the reaction S-ubiquitinyl-[E2 ubiquitin-conjugating enzyme]-L-cysteine + [acceptor protein]-L-lysine = [E2 ubiquitin-conjugating enzyme]-L-cysteine + N(6)-ubiquitinyl-[acceptor protein]-L-lysine.. The protein operates within protein modification; protein ubiquitination. Its function is as follows. Catalytic subunit of the KPC complex that acts as E3 ubiquitin-protein ligase. Promotes the ubiquitination and proteasome-mediated degradation of CDKN1B which is the cyclin-dependent kinase inhibitor at the G0-G1 transition of the cell cycle. Also acts as a key regulator of the NF-kappa-B signaling by promoting maturation of the NFKB1 component of NF-kappa-B. Acts by catalyzing ubiquitination of the NFKB1 p105 precursor, leading to limited proteasomal degradation of NFKB1 p105 and generation of the active NFKB1 p50 subunit. Functions also as an inhibitor of innate antiviral signaling mediated by RIGI and IFIH1 independently of its E3 ligase activity. Interacts with the N-terminal CARD domains of RIGI and IFIH1 and competes with the downstream adapter MAVS. This chain is E3 ubiquitin-protein ligase RNF123, found in Oryctolagus cuniculus (Rabbit).